Here is a 298-residue protein sequence, read N- to C-terminus: N-acetylmuramic acid 6-phosphate etherase (298 aa).

The SIS domain occupies 55 to 218 (IHAQVSGGGR…STGLMIKSGK (164 aa)). Residue Glu83 is the Proton donor of the active site. Residue Glu114 is part of the active site.

This sequence belongs to the GCKR-like family. MurNAc-6-P etherase subfamily. Homodimer.

It carries out the reaction N-acetyl-D-muramate 6-phosphate + H2O = N-acetyl-D-glucosamine 6-phosphate + (R)-lactate. The protein operates within amino-sugar metabolism; 1,6-anhydro-N-acetylmuramate degradation. It participates in amino-sugar metabolism; N-acetylmuramate degradation. Its pathway is cell wall biogenesis; peptidoglycan recycling. Its function is as follows. Specifically catalyzes the cleavage of the D-lactyl ether substituent of MurNAc 6-phosphate, producing GlcNAc 6-phosphate and D-lactate. Together with AnmK, is also required for the utilization of anhydro-N-acetylmuramic acid (anhMurNAc) either imported from the medium or derived from its own cell wall murein, and thus plays a role in cell wall recycling. The chain is N-acetylmuramic acid 6-phosphate etherase from Escherichia coli O17:K52:H18 (strain UMN026 / ExPEC).